A 487-amino-acid chain; its full sequence is Cobyric acid synthase (487 aa).

The 187-residue stretch at 249–435 folds into the GATase cobBQ-type domain; it reads GIDIAIVRLP…IHGIFDEGDF (187 aa). Residue Cys-330 is the Nucleophile of the active site. Residue His-427 is part of the active site.

This sequence belongs to the CobB/CobQ family. CobQ subfamily.

Its pathway is cofactor biosynthesis; adenosylcobalamin biosynthesis. Its function is as follows. Catalyzes amidations at positions B, D, E, and G on adenosylcobyrinic A,C-diamide. NH(2) groups are provided by glutamine, and one molecule of ATP is hydrogenolyzed for each amidation. The protein is Cobyric acid synthase of Clostridium perfringens (strain ATCC 13124 / DSM 756 / JCM 1290 / NCIMB 6125 / NCTC 8237 / Type A).